A 201-amino-acid chain; its full sequence is Retinol-binding protein 4 (201 aa).

An N-terminal signal peptide occupies residues 1–18 (MEWVWALVLLAALGGGSA). Intrachain disulfides connect C22-C178, C88-C192, and C138-C147. Q116 contacts substrate. An Omega-N-methylarginine modification is found at R139.

This sequence belongs to the calycin superfamily. Lipocalin family. In terms of assembly, interacts with TTR. Interaction with TTR prevents its loss by filtration through the kidney glomeruli. Interacts with STRA6. Detected in blood plasma (at protein level).

It localises to the secreted. In terms of biological role, retinol-binding protein that mediates retinol transport in blood plasma. Delivers retinol from the liver stores to the peripheral tissues. Transfers the bound all-trans retinol to STRA6, that then facilitates retinol transport across the cell membrane. The chain is Retinol-binding protein 4 (Rbp4) from Rattus norvegicus (Rat).